Consider the following 348-residue polypeptide: Ninja-family protein AFP2 (348 aa).

The disordered stretch occupies residues 186 to 272; that stretch reads DSDGGGATGG…VDRKGKGMAT (87 aa). Gly residues predominate over residues 187–197; sequence SDGGGATGGGS. 2 stretches are compositionally biased toward polar residues: residues 207 to 216 and 228 to 244; these read KNQQGSSNSC and CSSN…SVTR. Residues 247-267 show a composition bias toward basic and acidic residues; that stretch reads KVNENENEKRVRSEDSVDRKG.

Belongs to the Ninja family. As to quaternary structure, forms a homodimer and heterodimer with AFP1 and AFP3. Interacts with ABI5/DPBF1, DPBF2, AREB3/DPBF3, EEL/DPBF4, ABF1, ABF3/DPBF5 and ABF4/AREB2.

It is found in the nucleus. In terms of biological role, acts as a negative regulator of abscisic acid (ABA) response during germination through the ubiquitin-mediated proteolysis of ABI5/DPBF1. This is Ninja-family protein AFP2 (AFP2) from Arabidopsis thaliana (Mouse-ear cress).